The primary structure comprises 155 residues: Protein-export protein SecB (155 aa).

Belongs to the SecB family. Homotetramer, a dimer of dimers. One homotetramer interacts with 1 SecA dimer.

The protein localises to the cytoplasm. Functionally, one of the proteins required for the normal export of preproteins out of the cell cytoplasm. It is a molecular chaperone that binds to a subset of precursor proteins, maintaining them in a translocation-competent state. It also specifically binds to its receptor SecA. This is Protein-export protein SecB from Shigella sonnei (strain Ss046).